The chain runs to 249 residues: Aspartate/glutamate leucyltransferase (249 aa).

It belongs to the R-transferase family. Bpt subfamily.

It is found in the cytoplasm. It catalyses the reaction N-terminal L-glutamyl-[protein] + L-leucyl-tRNA(Leu) = N-terminal L-leucyl-L-glutamyl-[protein] + tRNA(Leu) + H(+). It carries out the reaction N-terminal L-aspartyl-[protein] + L-leucyl-tRNA(Leu) = N-terminal L-leucyl-L-aspartyl-[protein] + tRNA(Leu) + H(+). Functions in the N-end rule pathway of protein degradation where it conjugates Leu from its aminoacyl-tRNA to the N-termini of proteins containing an N-terminal aspartate or glutamate. The sequence is that of Aspartate/glutamate leucyltransferase from Brucella melitensis biotype 2 (strain ATCC 23457).